The chain runs to 23 residues: Basic phospholipase A2 Smb-N6 (23 aa).

Belongs to the phospholipase A2 family. Group II subfamily. Ca(2+) serves as cofactor. Post-translationally, contains 7 disulfide bonds. Expressed by the venom gland.

The protein localises to the secreted. It catalyses the reaction a 1,2-diacyl-sn-glycero-3-phosphocholine + H2O = a 1-acyl-sn-glycero-3-phosphocholine + a fatty acid + H(+). Functionally, snake venom phospholipase A2 (PLA2) that shows myotoxic activities. PLA2 catalyzes the calcium-dependent hydrolysis of the 2-acyl groups in 3-sn-phosphoglycerides. This chain is Basic phospholipase A2 Smb-N6, found in Sistrurus miliarius barbouri (Dusky pigmy rattlesnake).